The following is a 147-amino-acid chain: Ubiquitin-conjugating enzyme E2 2 (147 aa).

The UBC core domain occupies 1 to 147 (MALKRIQKEL…AREWTQKYAM (147 aa)). The Glycyl thioester intermediate role is filled by cysteine 85.

The protein belongs to the ubiquitin-conjugating enzyme family. As to quaternary structure, interacts with the brc-1-brd-1 heterodimer following ionizing irradiation. Expressed in the nervous system.

It is found in the nucleus. The protein resides in the chromosome. Its subcellular location is the cytoplasm. The catalysed reaction is S-ubiquitinyl-[E1 ubiquitin-activating enzyme]-L-cysteine + [E2 ubiquitin-conjugating enzyme]-L-cysteine = [E1 ubiquitin-activating enzyme]-L-cysteine + S-ubiquitinyl-[E2 ubiquitin-conjugating enzyme]-L-cysteine.. It participates in protein modification; protein ubiquitination. Its function is as follows. Catalyzes the covalent attachment of ubiquitin to other proteins. Mediates the selective degradation of short-lived and abnormal proteins. Plays a role in the DNA damage response. In particular, in response to ionizing radiation, associates with the E3 ubiquitin-protein ligase brc-1-brd-1 heterodimer on chromatin to activate E3-ubiquitin ligase activity of the heterodimer, and thus its DNA damage repair mechanisms. Required, cell autonomously, for death of the linker cell, a male-specific cell which guides the elongation of the gonad; perhaps acting as part of the ubiquitin proteasome system (UPS) and modulated by heat shock transcription factor hsf-1. The chain is Ubiquitin-conjugating enzyme E2 2 from Caenorhabditis elegans.